A 145-amino-acid chain; its full sequence is D-aminoacyl-tRNA deacylase (145 aa).

A Gly-cisPro motif, important for rejection of L-amino acids motif is present at residues 137-138 (GP).

It belongs to the DTD family. As to quaternary structure, homodimer.

The protein localises to the cytoplasm. It carries out the reaction glycyl-tRNA(Ala) + H2O = tRNA(Ala) + glycine + H(+). The catalysed reaction is a D-aminoacyl-tRNA + H2O = a tRNA + a D-alpha-amino acid + H(+). Functionally, an aminoacyl-tRNA editing enzyme that deacylates mischarged D-aminoacyl-tRNAs. Also deacylates mischarged glycyl-tRNA(Ala), protecting cells against glycine mischarging by AlaRS. Acts via tRNA-based rather than protein-based catalysis; rejects L-amino acids rather than detecting D-amino acids in the active site. By recycling D-aminoacyl-tRNA to D-amino acids and free tRNA molecules, this enzyme counteracts the toxicity associated with the formation of D-aminoacyl-tRNA entities in vivo and helps enforce protein L-homochirality. In Pseudomonas putida (strain GB-1), this protein is D-aminoacyl-tRNA deacylase.